Reading from the N-terminus, the 156-residue chain is Small ribosomal subunit protein uS7 (156 aa).

It belongs to the universal ribosomal protein uS7 family. Part of the 30S ribosomal subunit. Contacts proteins S9 and S11.

Functionally, one of the primary rRNA binding proteins, it binds directly to 16S rRNA where it nucleates assembly of the head domain of the 30S subunit. Is located at the subunit interface close to the decoding center, probably blocks exit of the E-site tRNA. In Actinobacillus pleuropneumoniae serotype 5b (strain L20), this protein is Small ribosomal subunit protein uS7.